The primary structure comprises 146 residues: Leghemoglobin Lb120-29 (146 aa).

The Globin domain occupies 2–146 (GFTDKQEALV…LASAIKKAMS (145 aa)). Nitrated tyrosine is present on residues Tyr24 and Tyr29. Ser44 provides a ligand contact to heme b. Ser44 carries the post-translational modification Phosphoserine. His61 contacts O2. Heme b-binding residues include Lys64, His93, and Lys96. The residue at position 134 (Tyr134) is a Nitrated tyrosine.

Belongs to the plant globin family. Monomer. Nitrated in effective nodules and particularly in hypoxic conditions; this mechanism may play a protective role in the symbiosis by buffering toxic peroxynitrite NO(2)(-). Nitration level decrease during nodule senescence. Post-translationally, phosphorylation at Ser-44 disrupts the molecular environment of its porphyrin ring oxygen binding pocket, thus leading to a reduced oxygen consumption and to the delivery of oxygen O(2) to symbiosomes. In terms of tissue distribution, root nodules.

It is found in the cytoplasm. The protein resides in the cytosol. It localises to the nucleus. Functionally, leghemoglobin that reversibly binds oxygen O(2) through a pentacoordinated heme iron. In root nodules, facilitates the diffusion of oxygen to the bacteroids while preventing the bacterial nitrogenase from being inactivated by buffering dioxygen, nitric oxide and carbon monoxide, and promoting the formation of reactive oxygen species (ROS, e.g. H(2)O(2)). This role is essential for symbiotic nitrogen fixation (SNF). The protein is Leghemoglobin Lb120-29 of Pisum sativum (Garden pea).